Reading from the N-terminus, the 684-residue chain is MDLPTTVVRKYWTFTNPNRILHQSVNQTFDVRQFVFDNARLVNCVDGDGKVLHLNKGWLCATIMQHGEASAGAKTQQGFMSIDITGDGELQEHLFVRGGIVFNKSVSSVVGSSGPNESALLTMISENGNLQVTYVRHYLKNHGESSGGGGGCGAASTASAVCVSSLGGSGGTRDGPSAEEQQRRRQEQRHEERRKKSSSSAGGGGGGGASGGGGGGGSGGQHSSDSANGLLRDPRLMNRQKERRPPPSSENDGSPPLREAKRQKTTAQHEGHGGGGKNETEQQSGGAGGGGGGGSGRMSLPLDTSEAVAFLNYSSSSSAVSSSSNNHHHHHHHHNAVTDVAAGTDGALLLPIERGAVVSSPSSTSPSSLLSLPRPSSAHSAGETVQESEAAATAAAAGLMMMRRMRRAPAEAAEAPPQSEEENDSTTPVSNCRVPPNSQESAAPQPPRSPRFDDIIQSLTKMLNDCKEKRLCDLPLVSSRLLPETSGGTVVVNHSSVARTAAAVSTAGVGPPAVACPPLVTTGVVPSGSVAGVAPVAAAVETPAAPPRPVCEIKPYVVNPVVATAAAASNSSSSSSAPLPPPPPPPGGRRGRARNNTRGGGGGGGGGRNSRRQAASSSSSSSRRSRRRNNRHEDEDNDPLLRLSQVAGSGRRRGPSFLEDGLEIIDPSEEAAIAAASIAAFFDD.

Disordered stretches follow at residues 166–301 (LGGS…MSLP), 317–336 (SSAV…HHNA), 357–393 (VVSS…AAAT), 407–452 (RAPA…SPRF), and 569–657 (SNSS…GPSF). The segment covering 180–191 (EQQRRRQEQRHE) has biased composition (basic and acidic residues). Gly residues predominate over residues 201-220 (AGGGGGGGASGGGGGGGSGG). Basic and acidic residues-rich tracts occupy residues 232-245 (RDPR…ERRP) and 258-272 (REAK…HEGH). Residues 261–264 (KRQK) carry the Nuclear localization signal motif. Over residues 285–296 (GGAGGGGGGGSG) the composition is skewed to gly residues. Residues 326-335 (NHHHHHHHHN) show a composition bias toward basic residues. A compositionally biased stretch (low complexity) spans 359-377 (SSPSSTSPSSLLSLPRPSS). Positions 425–442 (STTPVSNCRVPPNSQESA) are enriched in polar residues. The span at 578-587 (PLPPPPPPPG) shows a compositional bias: pro residues. A compositionally biased stretch (gly residues) spans 598 to 608 (RGGGGGGGGGR). Low complexity predominate over residues 612 to 622 (RQAASSSSSSS).

The protein belongs to the herpesviridae U79/UL112 family. Isoforms 1, 2, 3 and 4 interacts with themselves and with each other via their shared N-terminal regions; these interactions are important to both their intranuclear targeting and the recruitment of UL44 to subnuclear sites for viral replication.

Its subcellular location is the host nucleus. The protein localises to the virion. Needed for efficient replication. Recruits the DNA polymerase processivity factor to pre-replication foci. The sequence is that of Early phosphoprotein p84 (UL112/UL113) from Homo sapiens (Human).